The chain runs to 420 residues: UDP-N-acetylglucosamine 1-carboxyvinyltransferase (420 aa).

22-23 contributes to the phosphoenolpyruvate binding site; that stretch reads KN. Residue Arg93 participates in UDP-N-acetyl-alpha-D-glucosamine binding. Residue Cys117 is the Proton donor of the active site. Residue Cys117 is modified to 2-(S-cysteinyl)pyruvic acid O-phosphothioketal. Residues Asp307 and Ile329 each coordinate UDP-N-acetyl-alpha-D-glucosamine.

It belongs to the EPSP synthase family. MurA subfamily.

Its subcellular location is the cytoplasm. The enzyme catalyses phosphoenolpyruvate + UDP-N-acetyl-alpha-D-glucosamine = UDP-N-acetyl-3-O-(1-carboxyvinyl)-alpha-D-glucosamine + phosphate. Its pathway is cell wall biogenesis; peptidoglycan biosynthesis. Functionally, cell wall formation. Adds enolpyruvyl to UDP-N-acetylglucosamine. The polypeptide is UDP-N-acetylglucosamine 1-carboxyvinyltransferase (Cellvibrio japonicus (strain Ueda107) (Pseudomonas fluorescens subsp. cellulosa)).